Reading from the N-terminus, the 275-residue chain is Membrane protein insertase YidC 2 (275 aa).

A signal peptide spans 1–21; that stretch reads MKKKNIILISVLLGALLLLTG. C22 is lipidated: N-palmitoyl cysteine. C22 carries the S-diacylglycerol cysteine lipid modification. 4 helical membrane-spanning segments follow: residues 48–68, 133–153, 174–194, and 212–232; these read FVAK…TLLI, QMGC…YYAI, MVLA…SMIG, and IMIL…WAVG.

This sequence belongs to the OXA1/ALB3/YidC family. Type 2 subfamily.

It localises to the cell membrane. Functionally, required for the insertion and/or proper folding and/or complex formation of integral membrane proteins into the membrane. Involved in integration of membrane proteins that insert both dependently and independently of the Sec translocase complex, as well as at least some lipoproteins. This chain is Membrane protein insertase YidC 2, found in Listeria monocytogenes serotype 4b (strain F2365).